The following is a 502-amino-acid chain: ATP synthase subunit alpha (502 aa).

The segment at 115–139 (VDGLGPVETTETRPIESPAPGVMDR) is disordered. An ATP-binding site is contributed by 169–176 (GDRQTGKT).

Belongs to the ATPase alpha/beta chains family. In terms of assembly, F-type ATPases have 2 components, CF(1) - the catalytic core - and CF(0) - the membrane proton channel. CF(1) has five subunits: alpha(3), beta(3), gamma(1), delta(1), epsilon(1). CF(0) has three main subunits: a(1), b(2) and c(9-12). The alpha and beta chains form an alternating ring which encloses part of the gamma chain. CF(1) is attached to CF(0) by a central stalk formed by the gamma and epsilon chains, while a peripheral stalk is formed by the delta and b chains.

The protein resides in the cell membrane. The catalysed reaction is ATP + H2O + 4 H(+)(in) = ADP + phosphate + 5 H(+)(out). Produces ATP from ADP in the presence of a proton gradient across the membrane. The alpha chain is a regulatory subunit. This Geobacillus thermodenitrificans (strain NG80-2) protein is ATP synthase subunit alpha.